Reading from the N-terminus, the 203-residue chain is dITP/XTP pyrophosphatase (203 aa).

15-20 contributes to the substrate binding site; it reads SGNAGK. Mg(2+) contacts are provided by E45 and D74. D74 functions as the Proton acceptor in the catalytic mechanism. Substrate is bound by residues S75, 153 to 156, K176, and 181 to 182; these read FGYD and HR.

Belongs to the HAM1 NTPase family. As to quaternary structure, homodimer. The cofactor is Mg(2+).

The enzyme catalyses XTP + H2O = XMP + diphosphate + H(+). It catalyses the reaction dITP + H2O = dIMP + diphosphate + H(+). It carries out the reaction ITP + H2O = IMP + diphosphate + H(+). Functionally, pyrophosphatase that catalyzes the hydrolysis of nucleoside triphosphates to their monophosphate derivatives, with a high preference for the non-canonical purine nucleotides XTP (xanthosine triphosphate), dITP (deoxyinosine triphosphate) and ITP. Seems to function as a house-cleaning enzyme that removes non-canonical purine nucleotides from the nucleotide pool, thus preventing their incorporation into DNA/RNA and avoiding chromosomal lesions. The sequence is that of dITP/XTP pyrophosphatase from Prochlorococcus marinus (strain MIT 9313).